Consider the following 281-residue polypeptide: Diaminopimelate epimerase (281 aa).

The substrate site is built by Asn-13, Gln-46, and Asn-66. The active-site Proton donor is the Cys-75. Substrate is bound by residues 76-77, Asn-160, Asn-193, and 211-212; these read GN and ER. Catalysis depends on Cys-220, which acts as the Proton acceptor. Residue 221–222 coordinates substrate; it reads GT.

This sequence belongs to the diaminopimelate epimerase family. Homodimer.

The protein resides in the cytoplasm. It catalyses the reaction (2S,6S)-2,6-diaminopimelate = meso-2,6-diaminopimelate. It participates in amino-acid biosynthesis; L-lysine biosynthesis via DAP pathway; DL-2,6-diaminopimelate from LL-2,6-diaminopimelate: step 1/1. In terms of biological role, catalyzes the stereoinversion of LL-2,6-diaminopimelate (L,L-DAP) to meso-diaminopimelate (meso-DAP), a precursor of L-lysine and an essential component of the bacterial peptidoglycan. This is Diaminopimelate epimerase from Acinetobacter baylyi (strain ATCC 33305 / BD413 / ADP1).